A 548-amino-acid chain; its full sequence is Thermosome subunit beta (548 aa).

Belongs to the TCP-1 chaperonin family. As to quaternary structure, forms a Heterooligomeric complex of two stacked eight-membered rings.

In terms of biological role, molecular chaperone; binds unfolded polypeptides in vitro, and has a weak ATPase activity. The polypeptide is Thermosome subunit beta (thsB) (Aeropyrum pernix (strain ATCC 700893 / DSM 11879 / JCM 9820 / NBRC 100138 / K1)).